The primary structure comprises 131 residues: Putative gamma-taxilin 2 (131 aa).

The protein belongs to the taxilin family. Ubiquitously expressed.

This chain is Putative gamma-taxilin 2 (TXLNGY), found in Homo sapiens (Human).